A 351-amino-acid chain; its full sequence is Uroporphyrinogen decarboxylase (351 aa).

Substrate-binding positions include 25–29 (RQAGR), D74, Y151, S206, and H325.

The protein belongs to the uroporphyrinogen decarboxylase family. As to quaternary structure, homodimer.

The protein localises to the cytoplasm. The catalysed reaction is uroporphyrinogen III + 4 H(+) = coproporphyrinogen III + 4 CO2. It participates in porphyrin-containing compound metabolism; protoporphyrin-IX biosynthesis; coproporphyrinogen-III from 5-aminolevulinate: step 4/4. Catalyzes the decarboxylation of four acetate groups of uroporphyrinogen-III to yield coproporphyrinogen-III. The protein is Uroporphyrinogen decarboxylase of Chlorobium limicola (strain DSM 245 / NBRC 103803 / 6330).